The following is a 99-amino-acid chain: Putative septation protein SpoVG (99 aa).

This sequence belongs to the SpoVG family.

Its function is as follows. Could be involved in septation. The chain is Putative septation protein SpoVG from Aster yellows witches'-broom phytoplasma (strain AYWB).